The chain runs to 651 residues: Gag-Pro polyprotein (651 aa).

Residue Gly2 is the site of N-myristoyl glycine; by host attachment. Residues 93–144 form a disordered region; sequence QIPSRPAPPPPSSPTHDPPDSDPQIPPPYVEPTAPQVLPVMHPHGAPPNHRP. Position 105 is a phosphoserine; by host MAPK1 (Ser105). Residues 118-121 carry the PPXY motif motif; it reads PPPY. The PTAP/PSAP motif motif lies at 124–127; the sequence is PTAP. CCHC-type zinc fingers lie at residues 355–372 and 378–395; these read QPCF…DCTQ and GPCP…DCPR. The region spanning 476–554 is the Peptidase A2 domain; that stretch reads IEALLDTGAD…NNWAIIGRDA (79 aa). The For protease activity; shared with dimeric partner role is filled by Asp481.

Homodimer; the homodimers are part of the immature particles. Interacts with human TSG101 and NEDD4; these interactions are essential for budding and release of viral particles. In terms of assembly, homodimer; further assembles as homohexamers. Specific enzymatic cleavages by the viral protease yield mature proteins. The polyprotein is cleaved during and after budding, this process is termed maturation. The protease is autoproteolytically processed at its N- and C-termini. Post-translationally, phosphorylation of the matrix protein p19 by MAPK1 seems to play a role in budding. In terms of processing, myristoylated. Myristoylation of the matrix (MA) domain mediates the transport and binding of Gag polyproteins to the host plasma membrane and is required for the assembly of viral particles.

It is found in the virion. In terms of biological role, the matrix domain targets Gag, Gag-Pro and Gag-Pro-Pol polyproteins to the plasma membrane via a multipartite membrane binding signal, that includes its myristoylated N-terminus. Matrix protein. Functionally, forms the spherical core of the virus that encapsulates the genomic RNA-nucleocapsid complex. Its function is as follows. Binds strongly to viral nucleic acids and promote their aggregation. Also destabilizes the nucleic acids duplexes via highly structured zinc-binding motifs. In terms of biological role, the aspartyl protease mediates proteolytic cleavages of Gag and Gag-Pol polyproteins during or shortly after the release of the virion from the plasma membrane. Cleavages take place as an ordered, step-wise cascade to yield mature proteins. This process is called maturation. Displays maximal activity during the budding process just prior to particle release from the cell. Cleaves the translation initiation factor eIF4G leading to the inhibition of host cap-dependent translation. The polypeptide is Gag-Pro polyprotein (gag-pro) (Human T-cell leukemia virus 1 (strain Japan ATK-1 subtype A) (HTLV-1)).